Consider the following 317-residue polypeptide: MAGTWIFVEQRDGNIRKVTFEMLSEAKKFGDEVAAVVFGKGVEALAPEFAKYGADKVYVVEDDVFANYNTGAYVAQMVAMINEFKPNAVLFAHTFNGRDFASRLAQKLQLGLATDAIKVEVSAGKGVFTRAIYAGKALAKVEVAGEPVLGTIRPGVCEVGNTAGAGAVVKPAVAATAADVYQTVKSFVPTVSARPELTEADVVVSGGRGCKGPDGIKLVEQLADLLGAAVGGSRASIDSGWLGHELQVGQTGKVVNPNLYVAAGISGAIQHLAGMSSSKFIAAINTDTEAPIFNVSDFGVVADLFKVIPTLVSELKK.

It belongs to the ETF alpha-subunit/FixB family. As to quaternary structure, heterodimer of an alpha and a beta subunit. Requires FAD as cofactor.

It is found in the cytoplasm. It functions in the pathway lipid metabolism; butanoate metabolism. Its function is as follows. Part of an electron transfer flavoprotein involved in syntrophic growth of S.wolfei with butyrate. Probably receives electrons from butyryl-CoA dehydrogenases, and transfers them to the membrane-bound quinone oxidoreductase Swol_0698. In Syntrophomonas wolfei subsp. wolfei (strain DSM 2245B / Goettingen), this protein is Electron transfer flavoprotein subunit alpha.